Consider the following 315-residue polypeptide: Calumenin (315 aa).

The signal sequence occupies residues 1 to 19; the sequence is MDTRRLLLCLCLWVACVVS. EF-hand domains follow at residues 68–103, 104–139, 151–186, 188–223, 229–264, and 265–300; these read ESKERLGMIVSKIDLDNDGYVTEGELTAWIKKAQKK, YVYDNVERQWQEFDLNQDGLVSWDEYRNVTYGTYLD, QMMVRDERRFKMADQDGDLIATKEEFTAFLHPEEFD, MKDIVVLETMEDIDKNGDGLIDLEEYIGDMYNHDGD, WVKTEREQFVEFRDKNHDGKMDKEETKDWILPSDYD, and HAEAESRHLVYESDQNKDSKLTREEIVDKYDLFVGS. Ca(2+) is bound by residues Asp81, Asp83, Asp85, Tyr87, Glu92, Asp117, Asn119, Asp121, and Glu128. An N-linked (GlcNAc...) asparagine glycan is attached at Asn131. Ca(2+) contacts are provided by Asp164, Asp166, Asp168, Glu175, Asp201, Asn203, Asp205, Glu212, Asp242, Asn244, Asp246, Lys248, Glu253, Asp278, Asn280, Asp282, Lys284, and Glu289. Residues 312–315 carry the Prevents secretion from ER motif; sequence HDEF.

Belongs to the CREC family. Interacts with ggcx.

The protein localises to the endoplasmic reticulum membrane. The protein resides in the golgi apparatus. Its subcellular location is the secreted. It is found in the melanosome. It localises to the sarcoplasmic reticulum lumen. In terms of biological role, involved in regulation of vitamin K-dependent carboxylation of multiple N-terminal glutamate residues. Seems to inhibit gamma-carboxylase ggcx. Binds 7 calcium ions with a low affinity. This is Calumenin (calu) from Xenopus tropicalis (Western clawed frog).